The primary structure comprises 687 residues: DNA-directed RNA polymerase subunit beta' (687 aa).

Residues C69, C71, C87, and C90 each contribute to the Zn(2+) site. Mg(2+)-binding residues include D495, D497, and D499.

Belongs to the RNA polymerase beta' chain family. RpoC1 subfamily. In terms of assembly, in plastids the minimal PEP RNA polymerase catalytic core is composed of four subunits: alpha, beta, beta', and beta''. When a (nuclear-encoded) sigma factor is associated with the core the holoenzyme is formed, which can initiate transcription. Requires Mg(2+) as cofactor. It depends on Zn(2+) as a cofactor.

The protein resides in the plastid. Its subcellular location is the chloroplast. It carries out the reaction RNA(n) + a ribonucleoside 5'-triphosphate = RNA(n+1) + diphosphate. Functionally, DNA-dependent RNA polymerase catalyzes the transcription of DNA into RNA using the four ribonucleoside triphosphates as substrates. The protein is DNA-directed RNA polymerase subunit beta' of Solanum tuberosum (Potato).